Consider the following 229-residue polypeptide: Large ribosomal subunit protein uL1 (229 aa).

Belongs to the universal ribosomal protein uL1 family. In terms of assembly, part of the 50S ribosomal subunit.

Functionally, binds directly to 23S rRNA. The L1 stalk is quite mobile in the ribosome, and is involved in E site tRNA release. In terms of biological role, protein L1 is also a translational repressor protein, it controls the translation of the L11 operon by binding to its mRNA. This is Large ribosomal subunit protein uL1 from Latilactobacillus sakei subsp. sakei (strain 23K) (Lactobacillus sakei subsp. sakei).